A 311-amino-acid polypeptide reads, in one-letter code: tRNA-cytidine(32) 2-sulfurtransferase (311 aa).

The short motif at 47 to 52 (SGGKDS) is the PP-loop motif element. Residues Cys-122, Cys-125, and Cys-213 each coordinate [4Fe-4S] cluster.

This sequence belongs to the TtcA family. As to quaternary structure, homodimer. It depends on Mg(2+) as a cofactor. The cofactor is [4Fe-4S] cluster.

The protein resides in the cytoplasm. It carries out the reaction cytidine(32) in tRNA + S-sulfanyl-L-cysteinyl-[cysteine desulfurase] + AH2 + ATP = 2-thiocytidine(32) in tRNA + L-cysteinyl-[cysteine desulfurase] + A + AMP + diphosphate + H(+). The protein operates within tRNA modification. Functionally, catalyzes the ATP-dependent 2-thiolation of cytidine in position 32 of tRNA, to form 2-thiocytidine (s(2)C32). The sulfur atoms are provided by the cysteine/cysteine desulfurase (IscS) system. The chain is tRNA-cytidine(32) 2-sulfurtransferase from Escherichia coli O157:H7.